Consider the following 83-residue polypeptide: RNA-binding protein Hfq (83 aa).

In terms of domain architecture, Sm spans 9–68 (DPFLNALRKERIPVSIYLVNGIKLQGQVESFDQFVILLKNTVSQMVYKHAISTVVPSRAL).

This sequence belongs to the Hfq family. Homohexamer.

Its function is as follows. RNA chaperone that binds small regulatory RNA (sRNAs) and mRNAs to facilitate mRNA translational regulation in response to envelope stress, environmental stress and changes in metabolite concentrations. Also binds with high specificity to tRNAs. This chain is RNA-binding protein Hfq, found in Pseudoalteromonas atlantica (strain T6c / ATCC BAA-1087).